The following is a 209-amino-acid chain: Uridine kinase (209 aa).

12-19 (GGSGGGKT) is a binding site for ATP.

It belongs to the uridine kinase family.

It is found in the cytoplasm. It catalyses the reaction uridine + ATP = UMP + ADP + H(+). It carries out the reaction cytidine + ATP = CMP + ADP + H(+). It functions in the pathway pyrimidine metabolism; CTP biosynthesis via salvage pathway; CTP from cytidine: step 1/3. Its pathway is pyrimidine metabolism; UMP biosynthesis via salvage pathway; UMP from uridine: step 1/1. The chain is Uridine kinase from Streptococcus agalactiae serotype III (strain NEM316).